A 525-amino-acid chain; its full sequence is Membrane-bound lytic murein transglycosylase F (525 aa).

The N-terminal stretch at 1-24 (MQIRHFNRLKRSVLLFASVLLLSA) is a signal peptide. Residues 25–284 (CQIESQPKSE…SLEEKYIGHI (260 aa)) form a non-LT domain region. The segment at 286 to 525 (AFDYVDTRAF…VDEDLDQEEE (240 aa)) is LT domain. The active site involves Glu329. Positions 506–525 (VSGASDITNEVDEDLDQEEE) are disordered. The segment covering 514–525 (NEVDEDLDQEEE) has biased composition (acidic residues).

The protein in the N-terminal section; belongs to the bacterial solute-binding protein 3 family. It in the C-terminal section; belongs to the transglycosylase Slt family.

It localises to the cell outer membrane. The enzyme catalyses Exolytic cleavage of the (1-&gt;4)-beta-glycosidic linkage between N-acetylmuramic acid (MurNAc) and N-acetylglucosamine (GlcNAc) residues in peptidoglycan, from either the reducing or the non-reducing ends of the peptidoglycan chains, with concomitant formation of a 1,6-anhydrobond in the MurNAc residue.. In terms of biological role, murein-degrading enzyme that degrades murein glycan strands and insoluble, high-molecular weight murein sacculi, with the concomitant formation of a 1,6-anhydromuramoyl product. Lytic transglycosylases (LTs) play an integral role in the metabolism of the peptidoglycan (PG) sacculus. Their lytic action creates space within the PG sacculus to allow for its expansion as well as for the insertion of various structures such as secretion systems and flagella. This chain is Membrane-bound lytic murein transglycosylase F, found in Vibrio parahaemolyticus serotype O3:K6 (strain RIMD 2210633).